The following is a 306-amino-acid chain: Acetyl-coenzyme A carboxylase carboxyl transferase subunit beta (306 aa).

A CoA carboxyltransferase N-terminal domain is found at 27–296 (LWHKCPSCEA…PRFVAPVIEP (270 aa)). Cys31, Cys34, Cys50, and Cys53 together coordinate Zn(2+). The C4-type zinc-finger motif lies at 31-53 (CPSCEAVLYRPELEKTLDVCPKC).

It belongs to the AccD/PCCB family. As to quaternary structure, acetyl-CoA carboxylase is a heterohexamer composed of biotin carboxyl carrier protein (AccB), biotin carboxylase (AccC) and two subunits each of ACCase subunit alpha (AccA) and ACCase subunit beta (AccD). The cofactor is Zn(2+).

The protein resides in the cytoplasm. The catalysed reaction is N(6)-carboxybiotinyl-L-lysyl-[protein] + acetyl-CoA = N(6)-biotinyl-L-lysyl-[protein] + malonyl-CoA. The protein operates within lipid metabolism; malonyl-CoA biosynthesis; malonyl-CoA from acetyl-CoA: step 1/1. Component of the acetyl coenzyme A carboxylase (ACC) complex. Biotin carboxylase (BC) catalyzes the carboxylation of biotin on its carrier protein (BCCP) and then the CO(2) group is transferred by the transcarboxylase to acetyl-CoA to form malonyl-CoA. The protein is Acetyl-coenzyme A carboxylase carboxyl transferase subunit beta of Pseudomonas syringae pv. syringae (strain B728a).